A 339-amino-acid polypeptide reads, in one-letter code: NmrA-like family domain-containing oxidoreductase cpsB (339 aa).

Residue K142 participates in NADP(+) binding.

This sequence belongs to the NmrA-type oxidoreductase family.

It catalyses the reaction didehydrocampesine A + 2 AH2 = campesine A + 2 A. It participates in alkaloid biosynthesis. Oxidoreductase; part of the gene cluster that mediates the biosynthesis of campesine G, a dimeric indole piperazine alkaloid that shows good insecticidal activity Galleria mellonella. Within the pathway, cpsB reduces the unstable (S,S)-trypyl-valyl dihydropiperazine (didehydrocampesine A) intermediate to (S, S)-trypyl-valyl-piperazine (campesine A) using two equivalents of NAD(P)H. The non-canonical non-ribosomal peptide synthetase cpsA catalyzes the first steps of the pathway by producing L-tryptophanal and L-valinal from their respective amino-acids. These products condensate spontaneously to form trypyl-valyl pyrazine also known as didehydrocampesine A. The NmrA-like family domain-containing oxidoreductase cpsB is the next enzyme in cps pathway and reduces the unstable didehydrocampesine A to campesine A. The methyltransferase cpsF and the acetyltransferase cpsE both recognize N13 of piperazine ring to carry out methylation and acetylation of campesine A to produce campesine C and B, respectively. The cytochrome P450 monooxygenase cpsD then acts as a dimerase that catalyzes oxidative heterocoupling between campesine B and C to produce heterodimers with unexpected 6/5/6/6/6/6/5/6 eight-ring scaffold called campesine D. Finally,the cytochrome P450 monooxygenase cpsC is a regioselective dehydrogenase that catalyzes dehydrogenation reaction towards C2-N1 to produce campesine G. The chain is NmrA-like family domain-containing oxidoreductase cpsB from Aspergillus campestris (strain IBT 28561).